The chain runs to 84 residues: MSTNSESNARTMIGKVVSDKMDKTIVVMIERTVKHPKYGKIMKRRTKLHAHDENQVCRVGNTVKIRESRPLSKTKSWVLVEVIS.

Belongs to the universal ribosomal protein uS17 family. In terms of assembly, part of the 30S ribosomal subunit.

Functionally, one of the primary rRNA binding proteins, it binds specifically to the 5'-end of 16S ribosomal RNA. The polypeptide is Small ribosomal subunit protein uS17 (Legionella pneumophila (strain Paris)).